Consider the following 97-residue polypeptide: Co-chaperonin GroES (97 aa).

It belongs to the GroES chaperonin family. As to quaternary structure, heptamer of 7 subunits arranged in a ring. Interacts with the chaperonin GroEL.

It localises to the cytoplasm. Together with the chaperonin GroEL, plays an essential role in assisting protein folding. The GroEL-GroES system forms a nano-cage that allows encapsulation of the non-native substrate proteins and provides a physical environment optimized to promote and accelerate protein folding. GroES binds to the apical surface of the GroEL ring, thereby capping the opening of the GroEL channel. The polypeptide is Co-chaperonin GroES (Buchnera aphidicola subsp. Cinara cedri (strain Cc)).